A 621-amino-acid polypeptide reads, in one-letter code: MRQPNRKRKLSLESTERMNQDRCTGQTEEEKKPGEVTTPSKRESSVTTAETWSWEQYLREGNAVAAPVELFSKDQSFPEHENGFQVGMRLEGIDARRPSVFCVLSVAEVCGYRLRLHFDGYLSCYDFWTNAGSPDIHPVGWCQKTKHELHIPRDYRKDKFVWMDYLKACRLQNAPKKLFRNRSSNGPVPREFQVGMKLEAVDRRNPCLMCVATIADIVEDRVRVHFDSLDDSFDYWCDVNSPYIQPVGWCQENGRTLVAPQGYPHPDKFSWTDYLRASQSKAVPAKAFGMRTPHGFLPNMKLEAVDKRNPQLIRVATIADVDDYRVKIHFDGWDHKYDYWVDADSQDIHPIGWCDVTGHPLEVPYGSKHVKILPGQPACPTPGCRGIGHIRGPRYAGHHSAFGCPYSDVNLKREAALQDRLREQTQANLELDPSHSKSENPCNLNVNGKCENANSQCRLVQQAKCLKIKGKEDIDLDNLFRVLVFHPRRLEYSAAQVQQMLHQPLSMTSTSAHPFRDIPLSREQHCKLLPGVADIQASQVARWTVDEVAEFVQSLLGCEEHAKCFKKEQIDGKAFLLLTQADIVKVMRIKLGPALKIYNSILMFRNSQDVTEDASSQEDKR.

The segment at 1–48 is disordered; that stretch reads MRQPNRKRKLSLESTERMNQDRCTGQTEEEKKPGEVTTPSKRESSVTT. Composition is skewed to basic and acidic residues over residues 10-20 and 28-44; these read LSLESTERMNQ and EEEK…KRES. 3 MBT repeats span residues 52–152, 160–260, and 269–364; these read WSWE…LHIP, FVWM…LVAP, and FSWT…LEVP. The segment at 370 to 414 adopts a CCHHC-type zinc-finger fold; the sequence is VKILPGQPACPTPGCRGIGHIRGPRYAGHHSAFGCPYSDVNLKRE. Zn(2+)-binding residues include Cys-379, Cys-384, His-398, and Cys-404. The 65-residue stretch at 543–607 folds into the SAM domain; the sequence is WTVDEVAEFV…YNSILMFRNS (65 aa).

Its subcellular location is the nucleus. Its function is as follows. Putative Polycomb group (PcG) protein. PcG proteins maintain the transcriptionally repressive state of genes, probably via a modification of chromatin, rendering it heritably changed in its expressibility. The polypeptide is Lethal(3)malignant brain tumor-like protein 4 (L3mbtl4) (Mus musculus (Mouse)).